The following is a 242-amino-acid chain: Biosynthetic peptidoglycan transglycosylase (242 aa).

The chain crosses the membrane as a helical span at residues 19 to 39 (ILVVLAVFWGGGIALFSVVPV).

This sequence belongs to the glycosyltransferase 51 family.

The protein localises to the cell inner membrane. It catalyses the reaction [GlcNAc-(1-&gt;4)-Mur2Ac(oyl-L-Ala-gamma-D-Glu-L-Lys-D-Ala-D-Ala)](n)-di-trans,octa-cis-undecaprenyl diphosphate + beta-D-GlcNAc-(1-&gt;4)-Mur2Ac(oyl-L-Ala-gamma-D-Glu-L-Lys-D-Ala-D-Ala)-di-trans,octa-cis-undecaprenyl diphosphate = [GlcNAc-(1-&gt;4)-Mur2Ac(oyl-L-Ala-gamma-D-Glu-L-Lys-D-Ala-D-Ala)](n+1)-di-trans,octa-cis-undecaprenyl diphosphate + di-trans,octa-cis-undecaprenyl diphosphate + H(+). It participates in cell wall biogenesis; peptidoglycan biosynthesis. In terms of biological role, peptidoglycan polymerase that catalyzes glycan chain elongation from lipid-linked precursors. This Citrobacter koseri (strain ATCC BAA-895 / CDC 4225-83 / SGSC4696) protein is Biosynthetic peptidoglycan transglycosylase.